We begin with the raw amino-acid sequence, 663 residues long: Translation factor guf1, mitochondrial (663 aa).

The transit peptide at 1 to 51 (MRGCLQVLRWLSTSTARRPVSSRPLHEIFPKSEFRRPFTSTILRQAQASRN) directs the protein to the mitochondrion. The region spanning 65–245 (ERFRNFCIVA…TVIERIPAPV (181 aa)) is the tr-type G domain. Residues 74–81 (AHVDHGKS), 138–142 (DTPGH), and 192–195 (NKVD) contribute to the GTP site.

The protein belongs to the TRAFAC class translation factor GTPase superfamily. Classic translation factor GTPase family. LepA subfamily.

The protein localises to the mitochondrion inner membrane. The enzyme catalyses GTP + H2O = GDP + phosphate + H(+). Promotes mitochondrial protein synthesis. May act as a fidelity factor of the translation reaction, by catalyzing a one-codon backward translocation of tRNAs on improperly translocated ribosomes. Binds to mitochondrial ribosomes in a GTP-dependent manner. The polypeptide is Translation factor guf1, mitochondrial (guf1) (Talaromyces marneffei (strain ATCC 18224 / CBS 334.59 / QM 7333) (Penicillium marneffei)).